A 601-amino-acid polypeptide reads, in one-letter code: Glutathione-regulated potassium-efflux system protein KefB (601 aa).

A run of 13 helical transmembrane segments spans residues 4–24 (SDFLLAGVLFLFAAVAAVPLA), 29–49 (IGAVLGYLLAGIAIGPWGLGF), 55–75 (EILHFSELGVVFLMFIIGLEL), 87–107 (IFGVGAAQVLLSAALLAGLLM), 115–135 (AAVVGGIGLAMSSTAMALQLM), 152–172 (VLLFQDLAVIPALALVPLLAG), 177–197 (HFDWMKIGMKVLAFVGMLIGG), 207–227 (FIAASGVREVFTAATLLLVLG), 230–250 (LFMDALGLSMALGTFIAGVLL), 268–288 (GLLLGLFFISVGMSLNLGVLY), 291–311 (LLWVVISVVVLVAVKILVLYL), 324–344 (MQFAGVLSQGGEFAFVLFSTA), and 356–376 (ALLLVTVTLSMMTTPLLMKLV). Positions 400–519 (KPQVIVVGFG…AGVTQFSRET (120 aa)) constitute an RCK N-terminal domain.

The protein belongs to the monovalent cation:proton antiporter 2 (CPA2) transporter (TC 2.A.37) family. KefB subfamily. As to quaternary structure, interacts with the regulatory subunit KefG.

It localises to the cell inner membrane. Its function is as follows. Pore-forming subunit of a potassium efflux system that confers protection against electrophiles. Catalyzes K(+)/H(+) antiport. This Shigella sonnei (strain Ss046) protein is Glutathione-regulated potassium-efflux system protein KefB.